The chain runs to 300 residues: uncharacterized protein (300 aa).

Residues 1-20 (MRLLISCILILSILVNFISG) form the signal peptide. Residues 21–279 (HAVLVAPTPF…PCSIYGDGNG (259 aa)) are Extracellular-facing. 3 N-linked (GlcNAc...) asparagine glycosylation sites follow: asparagine 56, asparagine 217, and asparagine 278. The chain crosses the membrane as a helical span at residues 280–300 (SNLIIIPTLLIISILSLILMF).

It localises to the membrane. This is an uncharacterized protein from Dictyostelium discoideum (Social amoeba).